An 83-amino-acid polypeptide reads, in one-letter code: Cytochrome b559 subunit alpha (83 aa).

The chain crosses the membrane as a helical span at residues 21-35; sequence VIHSITIPSLFIAGW. A heme-binding site is contributed by His-23.

This sequence belongs to the PsbE/PsbF family. Heterodimer of an alpha subunit and a beta subunit. PSII is composed of 1 copy each of membrane proteins PsbA, PsbB, PsbC, PsbD, PsbE, PsbF, PsbH, PsbI, PsbJ, PsbK, PsbL, PsbM, PsbT, PsbX, PsbY, PsbZ, Psb30/Ycf12, at least 3 peripheral proteins of the oxygen-evolving complex and a large number of cofactors. It forms dimeric complexes. The cofactor is heme b.

The protein localises to the plastid. It is found in the chloroplast thylakoid membrane. This b-type cytochrome is tightly associated with the reaction center of photosystem II (PSII). PSII is a light-driven water:plastoquinone oxidoreductase that uses light energy to abstract electrons from H(2)O, generating O(2) and a proton gradient subsequently used for ATP formation. It consists of a core antenna complex that captures photons, and an electron transfer chain that converts photonic excitation into a charge separation. The sequence is that of Cytochrome b559 subunit alpha from Staurastrum punctulatum (Green alga).